Consider the following 295-residue polypeptide: MLERLTTEQRNNKTQNLDEMTTKEILQVMNEEDQTVAIAVSKELEHIERLVQKVIASFRQGGRLIYMGAGTSGRLGILDAVECPPTFGVEKEMVQGLIAGGLEAVTNAVEGAEDNEELAVKDLQSIGLTAKDTVIGIAASGRTPYVISGLRYAKQIGATTGSIACNKGAEISKYADVSVEVETGPEILTGSTRLKAGTAQKMVLNMISTASMIGIGKVYKNLMVDVQATNFKLKERAKRIIMEATDVDDKTAARYYEAARGHVKTAIVMILLQCSYEEATERLQKANGFVRKALQ.

An SIS domain is found at 54 to 217 (VIASFRQGGR…STASMIGIGK (164 aa)). The active-site Proton donor is Glu82. Glu113 is an active-site residue.

It belongs to the GCKR-like family. MurNAc-6-P etherase subfamily. As to quaternary structure, homodimer.

It catalyses the reaction N-acetyl-D-muramate 6-phosphate + H2O = N-acetyl-D-glucosamine 6-phosphate + (R)-lactate. It functions in the pathway amino-sugar metabolism; N-acetylmuramate degradation. Specifically catalyzes the cleavage of the D-lactyl ether substituent of MurNAc 6-phosphate, producing GlcNAc 6-phosphate and D-lactate. This chain is N-acetylmuramic acid 6-phosphate etherase, found in Geobacillus sp. (strain WCH70).